A 1170-amino-acid chain; its full sequence is Putative DNA topoisomerase 2, mitochondrial (1170 aa).

Residues N106, N135, S163 to N165, G176 to K183, and Q396 to K398 each bind ATP. The Toprim domain maps to C475 to Q590. Residues E481, D559, and D561 each contribute to the Mg(2+) site. The Topo IIA-type catalytic domain occupies I722–L1157. Catalysis depends on Y813, which acts as the O-(5'-phospho-DNA)-tyrosine intermediate.

It belongs to the type II topoisomerase family. In terms of assembly, homodimer. It depends on Mg(2+) as a cofactor. The cofactor is Mn(2+). Requires Ca(2+) as cofactor.

The protein localises to the mitochondrion. It carries out the reaction ATP-dependent breakage, passage and rejoining of double-stranded DNA.. Control of topological states of DNA by transient breakage and subsequent rejoining of DNA strands. Topoisomerase II makes double-strand breaks. The protein is Putative DNA topoisomerase 2, mitochondrial of Caenorhabditis elegans.